The primary structure comprises 500 residues: Probable cardiolipin synthase YwiE (500 aa).

The next 3 helical transmembrane spans lie at 6–26 (LEFF…FFPV), 31–51 (FYGG…SLIL), and 59–79 (TLLW…FYLF). 2 consecutive PLD phosphodiesterase domains span residues 237–264 (LNFR…GKEY) and 413–440 (QKGF…DMRS). Catalysis depends on residues His242, Lys244, Asp249, His418, Lys420, and Asp425.

This sequence belongs to the phospholipase D family. Cardiolipin synthase subfamily.

It localises to the cell membrane. The catalysed reaction is 2 a 1,2-diacyl-sn-glycero-3-phospho-(1'-sn-glycerol) = a cardiolipin + glycerol. Its function is as follows. Catalyzes the reversible phosphatidyl group transfer from one phosphatidylglycerol molecule to another to form cardiolipin (CL) (diphosphatidylglycerol) and glycerol. May have a role in the heat shock response since the level of the transcript of ywiE increases after a heat shock. The chain is Probable cardiolipin synthase YwiE (ywiE) from Bacillus subtilis (strain 168).